The sequence spans 161 residues: F-box only protein 48 (161 aa).

The segment at 1–25 (MKKTSKKNNNFKIPGTELNSADAER) is disordered. The F-box domain occupies 32–79 (RNFVELLPLEVTYKIFSQLDIQSLCRASRTCTGWNCAIRNNDSLWKPH).

The chain is F-box only protein 48 (Fbxo48) from Mus musculus (Mouse).